We begin with the raw amino-acid sequence, 211 residues long: Imidazole glycerol phosphate synthase subunit HisH (211 aa).

A Glutamine amidotransferase type-1 domain is found at 3 to 211 (VIAVVDYEMG…VAQVREKIPA (209 aa)). Catalysis depends on cysteine 81, which acts as the Nucleophile. Residues histidine 186 and glutamate 188 contribute to the active site.

Heterodimer of HisH and HisF.

It localises to the cytoplasm. The enzyme catalyses 5-[(5-phospho-1-deoxy-D-ribulos-1-ylimino)methylamino]-1-(5-phospho-beta-D-ribosyl)imidazole-4-carboxamide + L-glutamine = D-erythro-1-(imidazol-4-yl)glycerol 3-phosphate + 5-amino-1-(5-phospho-beta-D-ribosyl)imidazole-4-carboxamide + L-glutamate + H(+). It carries out the reaction L-glutamine + H2O = L-glutamate + NH4(+). It functions in the pathway amino-acid biosynthesis; L-histidine biosynthesis; L-histidine from 5-phospho-alpha-D-ribose 1-diphosphate: step 5/9. IGPS catalyzes the conversion of PRFAR and glutamine to IGP, AICAR and glutamate. The HisH subunit catalyzes the hydrolysis of glutamine to glutamate and ammonia as part of the synthesis of IGP and AICAR. The resulting ammonia molecule is channeled to the active site of HisF. The sequence is that of Imidazole glycerol phosphate synthase subunit HisH from Nostoc punctiforme (strain ATCC 29133 / PCC 73102).